Consider the following 264-residue polypeptide: Thymidylate synthase (264 aa).

Arg21 is a dUMP binding site. His51 is a binding site for (6R)-5,10-methylene-5,6,7,8-tetrahydrofolate. Residue 126–127 (RR) participates in dUMP binding. The active-site Nucleophile is Cys146. DUMP contacts are provided by residues 166–169 (RSAD), Asn177, and 207–209 (HLY). Asp169 contributes to the (6R)-5,10-methylene-5,6,7,8-tetrahydrofolate binding site. Residue Ala263 coordinates (6R)-5,10-methylene-5,6,7,8-tetrahydrofolate.

The protein belongs to the thymidylate synthase family. Bacterial-type ThyA subfamily. As to quaternary structure, homodimer.

The protein localises to the cytoplasm. It carries out the reaction dUMP + (6R)-5,10-methylene-5,6,7,8-tetrahydrofolate = 7,8-dihydrofolate + dTMP. Its pathway is pyrimidine metabolism; dTTP biosynthesis. Its function is as follows. Catalyzes the reductive methylation of 2'-deoxyuridine-5'-monophosphate (dUMP) to 2'-deoxythymidine-5'-monophosphate (dTMP) while utilizing 5,10-methylenetetrahydrofolate (mTHF) as the methyl donor and reductant in the reaction, yielding dihydrofolate (DHF) as a by-product. This enzymatic reaction provides an intracellular de novo source of dTMP, an essential precursor for DNA biosynthesis. The polypeptide is Thymidylate synthase (Legionella pneumophila (strain Lens)).